The sequence spans 253 residues: tRNA1(Val) (adenine(37)-N6)-methyltransferase (253 aa).

It belongs to the methyltransferase superfamily. tRNA (adenine-N(6)-)-methyltransferase family.

Its subcellular location is the cytoplasm. The catalysed reaction is adenosine(37) in tRNA1(Val) + S-adenosyl-L-methionine = N(6)-methyladenosine(37) in tRNA1(Val) + S-adenosyl-L-homocysteine + H(+). Its function is as follows. Specifically methylates the adenine in position 37 of tRNA(1)(Val) (anticodon cmo5UAC). In Dickeya chrysanthemi (strain Ech1591) (Dickeya zeae (strain Ech1591)), this protein is tRNA1(Val) (adenine(37)-N6)-methyltransferase.